The chain runs to 279 residues: uncharacterized protein (279 aa).

The protein belongs to the PhzF family.

This is an uncharacterized protein from Vibrio cholerae serotype O1 (strain ATCC 39315 / El Tor Inaba N16961).